We begin with the raw amino-acid sequence, 639 residues long: UvrABC system protein C (639 aa).

The 78-residue stretch at 20 to 97 (ERSGVYRMFD…IKKFQPKFNI (78 aa)) folds into the GIY-YIG domain. A UVR domain is found at 207–242 (KELQENLSRKMEELSSQMRFEEAAEIRDRIKALSYV).

Belongs to the UvrC family. Interacts with UvrB in an incision complex.

It is found in the cytoplasm. In terms of biological role, the UvrABC repair system catalyzes the recognition and processing of DNA lesions. UvrC both incises the 5' and 3' sides of the lesion. The N-terminal half is responsible for the 3' incision and the C-terminal half is responsible for the 5' incision. The sequence is that of UvrABC system protein C from Rickettsia africae (strain ESF-5).